We begin with the raw amino-acid sequence, 148 residues long: MKVVLLQDVKGLGKKDSVVEVNDGYARNYLIPRKLAVPATEGLEKHLKEKKEAEQKKKEKELEAAKDLASKLEKSQIIIKAKAGENGKLFGSITNKEIAEEIKKQLGFDINKKKIELDDPIKLIGSYDVVIRLYQGVVAKLKVHVTAS.

This sequence belongs to the bacterial ribosomal protein bL9 family.

Binds to the 23S rRNA. In Caldicellulosiruptor bescii (strain ATCC BAA-1888 / DSM 6725 / KCTC 15123 / Z-1320) (Anaerocellum thermophilum), this protein is Large ribosomal subunit protein bL9.